A 524-amino-acid chain; its full sequence is Cytochrome P450 monooxygenase lnaC (524 aa).

A helical membrane pass occupies residues 16 to 36; that stretch reads ALAVSCIAVSLFLLSPWIAYA. The N-linked (GlcNAc...) asparagine glycan is linked to Asn150. Cys471 is a binding site for heme.

This sequence belongs to the cytochrome P450 family. The cofactor is heme.

Its subcellular location is the membrane. The protein operates within secondary metabolite biosynthesis. In terms of biological role, cytochrome P450 monooxygenase; part of the lna gene cluster that mediates the biosynthesis of diastereomeric piperazines. Lna and lnb clusters encode sets of enzymes that produce overlapping sets of previously undescribed metabolites such as piperazinomycin-like metabolites or morpholine. The lna and lnb biosynthetic pathways appear to be part of a signaling network that controls the formation of sclerotia, a resilient overwintering structure. One primary function of the non-canonical nonribosomal peptide synthetases lnaA and lnbA consists in the reduction of L-tyrosine. The presence in the clusters of tailoring enzymes such as the oxidoreductases lnaB, lnbB, lnaE or lnbE, as well as of the cytochrome P450 monooxygenases lnaC, lnaD, or lnbC, might explain formation of various diastereomeric piperazines. This is Cytochrome P450 monooxygenase lnaC from Aspergillus flavus (strain ATCC 200026 / FGSC A1120 / IAM 13836 / NRRL 3357 / JCM 12722 / SRRC 167).